Here is a 370-residue protein sequence, read N- to C-terminus: Pantothenate kinase 3 (370 aa).

The Proton acceptor role is filled by glutamate 138. Serine 192, serine 195, and arginine 207 together coordinate acetyl-CoA.

This sequence belongs to the type II pantothenate kinase family. As to quaternary structure, homodimer. In terms of tissue distribution, highly expressed in the liver.

It is found in the cytoplasm. The enzyme catalyses (R)-pantothenate + ATP = (R)-4'-phosphopantothenate + ADP + H(+). It participates in cofactor biosynthesis; coenzyme A biosynthesis; CoA from (R)-pantothenate: step 1/5. With respect to regulation, subject to allosteric regulation, exists in two distinct conformational states, a catalytically incompetent (or open) conformation stabilized by the binding of acetyl(acyl)-CoA, and a catalytically competent (or closed) conformation stabilized by ATP-binding. Inhibited by acetyl-CoA and its thioesters which act as allosteric inhibitors and compete with the ATP-binding site. Inhibited by sulfonylureas and thiazolidinediones. Activated by oleoylethanolamide, palmitoyl-carnitine and oleoyl-carnitine. In terms of biological role, catalyzes the phosphorylation of pantothenate to generate 4'-phosphopantothenate in the first and rate-determining step of coenzyme A (CoA) synthesis. This chain is Pantothenate kinase 3 (PANK3), found in Homo sapiens (Human).